A 155-amino-acid polypeptide reads, in one-letter code: DNA gyrase inhibitor (155 aa).

It belongs to the DNA gyrase inhibitor family. In terms of assembly, interacts with DNA gyrase.

It localises to the cytoplasm. Inhibits the supercoiling activity of DNA gyrase. Acts by inhibiting DNA gyrase at an early step, prior to (or at the step of) binding of DNA by the gyrase. It protects cells against toxins that target DNA gyrase, by inhibiting activity of these toxins and reducing the formation of lethal double-strand breaks in the cell. The sequence is that of DNA gyrase inhibitor from Citrobacter koseri (strain ATCC BAA-895 / CDC 4225-83 / SGSC4696).